The following is a 466-amino-acid chain: Siroheme synthase (466 aa).

Residues methionine 1–leucine 203 form a precorrin-2 dehydrogenase /sirohydrochlorin ferrochelatase region. NAD(+) is bound by residues serine 22–isoleucine 23 and lysine 43–serine 44. Serine 128 carries the phosphoserine modification. The tract at residues glycine 216 to lysine 466 is uroporphyrinogen-III C-methyltransferase. Proline 225 contacts S-adenosyl-L-methionine. Aspartate 248 acts as the Proton acceptor in catalysis. The active-site Proton donor is the lysine 270. Residues glycine 301 to aspartate 303, isoleucine 306, threonine 331 to alanine 332, methionine 383, and glycine 412 each bind S-adenosyl-L-methionine.

It in the N-terminal section; belongs to the precorrin-2 dehydrogenase / sirohydrochlorin ferrochelatase family. This sequence in the C-terminal section; belongs to the precorrin methyltransferase family.

The catalysed reaction is uroporphyrinogen III + 2 S-adenosyl-L-methionine = precorrin-2 + 2 S-adenosyl-L-homocysteine + H(+). It catalyses the reaction precorrin-2 + NAD(+) = sirohydrochlorin + NADH + 2 H(+). The enzyme catalyses siroheme + 2 H(+) = sirohydrochlorin + Fe(2+). It functions in the pathway cofactor biosynthesis; adenosylcobalamin biosynthesis; precorrin-2 from uroporphyrinogen III: step 1/1. The protein operates within cofactor biosynthesis; adenosylcobalamin biosynthesis; sirohydrochlorin from precorrin-2: step 1/1. Its pathway is porphyrin-containing compound metabolism; siroheme biosynthesis; precorrin-2 from uroporphyrinogen III: step 1/1. It participates in porphyrin-containing compound metabolism; siroheme biosynthesis; siroheme from sirohydrochlorin: step 1/1. It functions in the pathway porphyrin-containing compound metabolism; siroheme biosynthesis; sirohydrochlorin from precorrin-2: step 1/1. Multifunctional enzyme that catalyzes the SAM-dependent methylations of uroporphyrinogen III at position C-2 and C-7 to form precorrin-2 via precorrin-1. Then it catalyzes the NAD-dependent ring dehydrogenation of precorrin-2 to yield sirohydrochlorin. Finally, it catalyzes the ferrochelation of sirohydrochlorin to yield siroheme. This chain is Siroheme synthase, found in Vesicomyosocius okutanii subsp. Calyptogena okutanii (strain HA).